The following is a 352-amino-acid chain: DNA-directed RNA polymerase subunit alpha (352 aa).

The tract at residues 1–226 (MLISQRPTLT…ELFGLARELN (226 aa)) is alpha N-terminal domain (alpha-NTD). The interval 243 to 352 (HIASFGLPIE…EQDYAETEQL (110 aa)) is alpha C-terminal domain (alpha-CTD). The segment at 324-352 (DASTGTWSDSGTFSDNDGGEQDYAETEQL) is disordered. Residues 326–338 (STGTWSDSGTFSD) show a composition bias toward polar residues. Residues 340 to 352 (DGGEQDYAETEQL) are compositionally biased toward acidic residues.

This sequence belongs to the RNA polymerase alpha chain family. In terms of assembly, homodimer. The RNAP catalytic core consists of 2 alpha, 1 beta, 1 beta' and 1 omega subunit. When a sigma factor is associated with the core the holoenzyme is formed, which can initiate transcription.

The catalysed reaction is RNA(n) + a ribonucleoside 5'-triphosphate = RNA(n+1) + diphosphate. Its function is as follows. DNA-dependent RNA polymerase catalyzes the transcription of DNA into RNA using the four ribonucleoside triphosphates as substrates. The chain is DNA-directed RNA polymerase subunit alpha from Nocardia farcinica (strain IFM 10152).